A 389-amino-acid polypeptide reads, in one-letter code: Inner membrane transport protein YdhP (389 aa).

At 1 to 6 (MKINYP) the chain is on the cytoplasmic side. A helical transmembrane segment spans residues 7–27 (LLALAIGAFGIGTTEFSPMGL). The Periplasmic portion of the chain corresponds to 28-43 (LPVIARGVDVSIPAAG). A helical transmembrane segment spans residues 44 to 64 (MLISAYAVGVMVGAPLMTLLL). At 65–70 (SHRARR) the chain is on the cytoplasmic side. The helical transmembrane segment at 71–91 (SALIFLMAIFTLGNVLSAIAP) threads the bilayer. Over 92 to 100 (DYMTLMLSR) the chain is Periplasmic. A helical membrane pass occupies residues 101-121 (ILTSLNHGAFFGLGSVVAASV). Over 122–130 (VPKHKQASA) the chain is Cytoplasmic. The chain crosses the membrane as a helical span at residues 131 to 151 (VATMFMGLTLANIGGVPAATW). The Periplasmic segment spans residues 152-159 (LGETIGWR). Residues 160–180 (MSFLATAGLGVISMVSLFFSL) traverse the membrane as a helical segment. The Cytoplasmic segment spans residues 181–203 (PKGGAGARPEVKKELAVLMRPQV). Residues 204–224 (LSALLTTVLGAGAMFTLYTYI) traverse the membrane as a helical segment. The Periplasmic portion of the chain corresponds to 225–236 (SPVLQSITHATP). A helical transmembrane segment spans residues 237–257 (VFVTAMLVLIGVGFSIGNYLG). At 258–266 (GKLADRSVN) the chain is on the cytoplasmic side. The chain crosses the membrane as a helical span at residues 267–287 (GTLKGFLLLLMVIMLAIPFLA). Topologically, residues 288-290 (RNE) are periplasmic. Residues 291–311 (FGAAISMVVWGAATFAVVPPL) form a helical membrane-spanning segment. The Cytoplasmic segment spans residues 312-330 (QMRVMRVASEAPGLSSSVN). A helical membrane pass occupies residues 331–351 (IGAFNLGNALGAAAGGAVISA). At 352–356 (GLGYS) the chain is on the periplasmic side. A helical membrane pass occupies residues 357-377 (FVPVMGAIVAGLALLLVFMSA). At 378 to 389 (RKQPETVCVANS) the chain is on the cytoplasmic side.

This sequence belongs to the major facilitator superfamily.

Its subcellular location is the cell inner membrane. This is Inner membrane transport protein YdhP (ydhP) from Escherichia coli (strain K12).